A 493-amino-acid polypeptide reads, in one-letter code: Desmethylyatein synthase (493 aa).

A helical transmembrane segment spans residues 1-21 (METFQCLTLFLLFISTVFILK). C434 is a binding site for heme.

Belongs to the cytochrome P450 family. Requires heme as cofactor.

Its subcellular location is the membrane. The catalysed reaction is (-)-bursehernin + reduced [NADPH--hemoprotein reductase] + O2 = (-)-5'-demethylyatein + oxidized [NADPH--hemoprotein reductase] + H2O + H(+). It participates in aromatic compound metabolism; phenylpropanoid biosynthesis. In terms of biological role, cytochrome P450 involved in the biosynthesis of etoposide, a chemotherapeutic compound of the topoisomerase inhibitor family. Catalyzes the conversion of bursehernin to demethylyatein. The polypeptide is Desmethylyatein synthase (Sinopodophyllum hexandrum (Himalayan may apple)).